Here is a 61-residue protein sequence, read N- to C-terminus: Small ribosomal subunit protein uS14 (61 aa).

Zn(2+)-binding residues include cysteine 24, cysteine 27, cysteine 40, and cysteine 43.

This sequence belongs to the universal ribosomal protein uS14 family. Zinc-binding uS14 subfamily. As to quaternary structure, part of the 30S ribosomal subunit. Contacts proteins S3 and S10. It depends on Zn(2+) as a cofactor.

Its function is as follows. Binds 16S rRNA, required for the assembly of 30S particles and may also be responsible for determining the conformation of the 16S rRNA at the A site. This is Small ribosomal subunit protein uS14 from Anaeromyxobacter dehalogenans (strain 2CP-1 / ATCC BAA-258).